We begin with the raw amino-acid sequence, 93 residues long: Small ribosomal subunit protein uS19 (93 aa).

This sequence belongs to the universal ribosomal protein uS19 family.

Its function is as follows. Protein S19 forms a complex with S13 that binds strongly to the 16S ribosomal RNA. This Rubrobacter xylanophilus (strain DSM 9941 / JCM 11954 / NBRC 16129 / PRD-1) protein is Small ribosomal subunit protein uS19.